Consider the following 293-residue polypeptide: FAS1 domain-containing protein DEHA2G15708g (293 aa).

A signal peptide spans 1–18; that stretch reads MKLSSILYVSVLAHLVMS. Residues 76–87 are compositionally biased toward basic and acidic residues; it reads DHIGENEKREAK. Residues 76–126 form a disordered region; the sequence is DHIGENEKREAKNVYNLQSLKEGLDDENDKREGNVNKPEVSEEGSNKGDKR. The region spanning 141-290 is the FAS1 domain; the sequence is QNLLQSILPQ…GYIFVINDVL (150 aa).

It is found in the vacuole. This is FAS1 domain-containing protein DEHA2G15708g from Debaryomyces hansenii (strain ATCC 36239 / CBS 767 / BCRC 21394 / JCM 1990 / NBRC 0083 / IGC 2968) (Yeast).